Consider the following 613-residue polypeptide: Ribosome-associated molecular chaperone SSB1 (613 aa).

The tract at residues 1-391 (MAEGVFPGAI…ILTGQSTSDE (391 aa)) is nucleotide binding domain (NBD). ATP is bound by residues 16–18 (TTY), K73, 205–207 (GGT), 271–278 (ERAKRTLS), and G342. Residues 392-402 (TKDLLLLDVAP) form an inter-domain linker region. A substrate binding domain (SBD) region spans residues 403 to 613 (LSLGVGMAGD…RAVTKAMSTR (211 aa)). Residues 516-612 (SEEIEQMVNQ…KRAVTKAMST (97 aa)) are lid domain (SBDalpha). Residues 574-582 (VEAALADAF) carry the Nuclear export signal motif.

The protein belongs to the heat shock protein 70 family. Ssb-type Hsp70 subfamily. Binds to ribosomes. Binds close to the ribosomal tunnel exit via contacts with both ribosomal proteins and rRNA. Directly interacts with nascent polypeptides. This interaction is dependent on the ribosome-associated complex (RAC). Interacts with SSE1. Interacts with FES1.

It localises to the cytoplasm. The catalysed reaction is ATP + H2O = ADP + phosphate + H(+). Ribosome-bound, Hsp70-type chaperone that assists in the cotranslational folding of newly synthesized proteins in the cytosol. Stimulates folding by interacting with nascent chains, binding to short, largely hydrophobic sequences exposed by unfolded proteins, thereby stabilizing longer, more slowly translated, and aggregation-prone nascent polypeptides and domains that cannot fold stably until fully synthesized. The Hsp70-protein substrate interaction depends on ATP-binding and on allosteric regulation between the NBD and the SBD. The ATP-bound state is characterized by a fast exchange rate of substrate (low affinity state), while in the ADP-bound state exchange is much slower (high affinity state). During the Hsp70 cycle, the chaperone switches between the ATP-bound state (open conformation) and the ADP-bound state (closed conformation) by major conformational rearrangements involving mainly the lid domain. Ssb cooperates with a specific Hsp40/Hsp70 co-chaperone termed the ribosome-associated complex (RAC), which stimulates the ATPase activity of the ribosome-associated pool of Ssbs and switches it to the high affinity substrate binding state. Hsp110 chaperone SSE1 and FES1 act as nucleotide exchange factors that cause substrate release. In Kluyveromyces marxianus (Yeast), this protein is Ribosome-associated molecular chaperone SSB1 (SSB1).